Here is a 359-residue protein sequence, read N- to C-terminus: MCKKNILSNIKKKKINLLNFNLKKMINFFIKIGEKKFRAIQITDWIYKKQNIKFDQMSNLNFFLKKKLNNIAVIKIPKCIKKIKSIDGTIKWKFLCNKEFIETIYIPEKKRATLCISSQVGCQLKCNFCATGQLGYKRNLLVSEIIGQIWYVINKIKKYNSKKKNFPPIKNIVMMGMGEPLLNLKNIIIAIDIILGNYGFNFSKNKVTLSTSGIVPAINKIAGKIDISLAVSLHASNNTIRNKIMPINKIYNIQLLLESIKNYLKKSSANKGIVTIEYVMLSKINDFQHHAIELSNLLKNIPCKINLIPWNPIKNSSYICSSSKNIINFANFLRKKGFIVIIRKNRGSDIQAACGQLIA.

Glutamate 102 functions as the Proton acceptor in the catalytic mechanism. The 244-residue stretch at 108–351 (EKKRATLCIS…IRKNRGSDIQ (244 aa)) folds into the Radical SAM core domain. A disulfide bridge connects residues cysteine 115 and cysteine 354. [4Fe-4S] cluster contacts are provided by cysteine 122, cysteine 126, and cysteine 129. S-adenosyl-L-methionine contacts are provided by residues 178-179 (GE), serine 210, 232-234 (SLH), and asparagine 311. Residue cysteine 354 is the S-methylcysteine intermediate of the active site.

Belongs to the radical SAM superfamily. RlmN family. Requires [4Fe-4S] cluster as cofactor.

It is found in the cytoplasm. It carries out the reaction adenosine(2503) in 23S rRNA + 2 reduced [2Fe-2S]-[ferredoxin] + 2 S-adenosyl-L-methionine = 2-methyladenosine(2503) in 23S rRNA + 5'-deoxyadenosine + L-methionine + 2 oxidized [2Fe-2S]-[ferredoxin] + S-adenosyl-L-homocysteine. The enzyme catalyses adenosine(37) in tRNA + 2 reduced [2Fe-2S]-[ferredoxin] + 2 S-adenosyl-L-methionine = 2-methyladenosine(37) in tRNA + 5'-deoxyadenosine + L-methionine + 2 oxidized [2Fe-2S]-[ferredoxin] + S-adenosyl-L-homocysteine. Its function is as follows. Specifically methylates position 2 of adenine 2503 in 23S rRNA and position 2 of adenine 37 in tRNAs. m2A2503 modification seems to play a crucial role in the proofreading step occurring at the peptidyl transferase center and thus would serve to optimize ribosomal fidelity. The sequence is that of Dual-specificity RNA methyltransferase RlmN from Buchnera aphidicola subsp. Cinara cedri (strain Cc).